A 1543-amino-acid polypeptide reads, in one-letter code: ATP-binding cassette sub-family C member 2 (1543 aa).

Residues 1–26 (MDEFCNSTFWNLSLLKSPEADLPLCF) are Extracellular-facing. N-linked (GlcNAc...) asparagine glycosylation is found at Asn6 and Asn11. Residues 27–47 (EQTVLVWIPLGFLWLLAPWQL) traverse the membrane as a helical segment. Residues 48–67 (YRIYRSRTKRFAITKFYLAK) lie on the Cytoplasmic side of the membrane. The chain crosses the membrane as a helical span at residues 68–88 (QVFVVCLLILAAIDLSLALTE). Residues 89–92 (DTGQ) are Extracellular-facing. The chain crosses the membrane as a helical span at residues 93–113 (ATIPPVKYTNPILYLCTWLLV). Residues 114-125 (LVIQHCRQCCIQ) are Cytoplasmic-facing. A helical transmembrane segment spans residues 126–146 (KNSWFLSMFWILSLLCGIFQF). Residues 147-164 (QTLIRALLQDSKSNMTYS) are Extracellular-facing. Residue Asn160 is glycosylated (N-linked (GlcNAc...) asparagine). Residues 165-185 (CLFFVSYGFQIVILILSAFSE) form a helical membrane-spanning segment. At 186–311 (SSDSTHAPSA…DFPKSWLVKA (126 aa)) the chain is on the cytoplasmic side. Positions 260–285 (LKKSQQSPEGTSHGLTKKQSQSQDVL) are disordered. Polar residues predominate over residues 263–283 (SQQSPEGTSHGLTKKQSQSQD). A phosphoserine mark is found at Ser279 and Ser281. A helical membrane pass occupies residues 312–332 (LFKTFYVVILKSFILKLAHDI). An ABC transmembrane type-1 1 domain is found at 320–603 (ILKSFILKLA…LPMVISSVIQ (284 aa)). Residues 333–358 (LLFLNPQLLKFLIGFVKDPDSYPWVG) are Extracellular-facing. A helical transmembrane segment spans residues 359–379 (YIYAILMFSVTLIQSFFLQCY). The Cytoplasmic portion of the chain corresponds to 380–435 (FQFCFVLGMTVRTTIIASVYKKALTLSNLARRQYTIGETVNLMSVDSQKLMDVTNY). The helical transmembrane segment at 436–456 (IHLLWSSVLQIALSIFFLWRE) threads the bilayer. Residues 457 to 459 (LGP) are Extracellular-facing. The chain crosses the membrane as a helical span at residues 460–480 (SILAGVGLMVLLVPVNGVLAT). Residues 481–542 (KIRKIQVQNM…NLLRFSQLQT (62 aa)) are Cytoplasmic-facing. A helical transmembrane segment spans residues 543–563 (ILIFILHLTPTLVSVITFSVY). At 564-585 (VLVDSQNVLNAEKAFTSITLFN) the chain is on the extracellular side. The helical transmembrane segment at 586–606 (ILRFPLAMLPMVISSVIQASV) threads the bilayer. Over 607 to 969 (SVDRLEQYLG…VKFSIYLKYL (363 aa)) the chain is Cytoplasmic. The region spanning 635 to 859 (VQFSEASFTW…KGVFAKNWKT (225 aa)) is the ABC transporter 1 domain. Position 669–676 (669–676 (GTVGSGKS)) interacts with ATP. Ser876 is subject to Phosphoserine. A disordered region spans residues 903-927 (RENSLRRTLSRSSRSGSRRGKSLKS). The segment covering 908–917 (RRTLSRSSRS) has biased composition (low complexity). 2 positions are modified to phosphoserine: Ser924 and Ser928. The chain crosses the membrane as a helical span at residues 970–990 (QAVGWWSLLFIVIFYVLNYVA). Positions 977-1262 (LLFIVIFYVL…LVRMTSEVET (286 aa)) constitute an ABC transmembrane type-1 2 domain. At 991–1031 (FIGTNLWLSAWTSDSEKQNGTDNSPSQRDMRIGVFGALGIA) the chain is on the extracellular side. Asn1009 carries N-linked (GlcNAc...) asparagine glycosylation. The chain crosses the membrane as a helical span at residues 1032–1052 (QGIFLLSSSLWSIYACRNASK). The Cytoplasmic segment spans residues 1053–1095 (TLHRQLLTNILRAPMSFFDTTPTGRIVNRFAGDISTVDDTLPQ). Residues 1096-1116 (TLRSWLLCFFGIVSTLVMICM) traverse the membrane as a helical segment. Position 1117 (Ala1117) is a topological domain, extracellular. A helical transmembrane segment spans residues 1118–1138 (TPIFIIIIIPLSILYVSVQVF). At 1139–1209 (YVATSRQLRR…TSNRWLAIRL (71 aa)) the chain is on the cytoplasmic side. Residues 1210 to 1230 (ELVGNLIVFCSALLLVIYKNS) traverse the membrane as a helical segment. Residues 1231–1232 (LT) lie on the Extracellular side of the membrane. A helical transmembrane segment spans residues 1233-1253 (GDTVGFVLSNALNITQTLNWL). Topologically, residues 1254–1543 (VRMTSEVETN…GIESVNHTEL (290 aa)) are cytoplasmic. The ABC transporter 2 domain occupies 1298–1532 (IQFNNYQVRY…MGPFYLMAKE (235 aa)). ATP is bound at residue 1332–1339 (GRTGAGKS). A Phosphoserine modification is found at Ser1436.

It belongs to the ABC transporter superfamily. ABCC family. Conjugate transporter (TC 3.A.1.208) subfamily. In terms of tissue distribution, expressed in liver.

Its subcellular location is the apical cell membrane. The catalysed reaction is an S-substituted glutathione(in) + ATP + H2O = an S-substituted glutathione(out) + ADP + phosphate + H(+). It carries out the reaction taurolithocholate 3-sulfate(in) + ATP + H2O = taurolithocholate 3-sulfate(out) + ADP + phosphate + H(+). It catalyses the reaction ATP + H2O + xenobioticSide 1 = ADP + phosphate + xenobioticSide 2.. The enzyme catalyses leukotriene C4(in) + ATP + H2O = leukotriene C4(out) + ADP + phosphate + H(+). The catalysed reaction is 17beta-estradiol 17-O-(beta-D-glucuronate)(in) + ATP + H2O = 17beta-estradiol 17-O-(beta-D-glucuronate)(out) + ADP + phosphate + H(+). It carries out the reaction (4Z,15Z)-bilirubin IXalpha C8-beta-D-glucuronoside(in) + ATP + H2O = (4Z,15Z)-bilirubin IXalpha C8-beta-D-glucuronoside(out) + ADP + phosphate + H(+). It catalyses the reaction (4Z,15Z)-bilirubin IXalpha C8,C12-beta-D-bisglucuronoside(in) + ATP + H2O = (4Z,15Z)-bilirubin IXalpha C8,C12-beta-D-bisglucuronoside(out) + ADP + phosphate + H(+). ATP-dependent transporter of the ATP-binding cassette (ABC) family that binds and hydrolyzes ATP to enable active transport of various substrates including many drugs, toxicants and endogenous compound across cell membranes. Transports a wide variety of conjugated organic anions such as sulfate-, glucuronide- and glutathione (GSH)-conjugates of endo- and xenobiotics substrates. Mediates hepatobiliary excretion of mono- and bis-glucuronidated bilirubin molecules and therefore play an important role in bilirubin detoxification. Mediates also hepatobiliary excretion of others glucuronide conjugates such as 17beta-estradiol 17-glucosiduronic acid and leukotriene C4. Transports sulfated bile salt such as taurolithocholate sulfate. Transports various anticancer drugs, such as anthracycline, vinca alkaloid and methotrexate and HIV-drugs such as protease inhibitors. The sequence is that of ATP-binding cassette sub-family C member 2 from Mus musculus (Mouse).